The following is a 256-amino-acid chain: Protein FixA (256 aa).

The protein belongs to the ETF beta-subunit/FixA family. In terms of assembly, heterodimer of FixA and FixB.

The protein operates within amine and polyamine metabolism; carnitine metabolism. Required for anaerobic carnitine reduction. May bring reductant to CaiA. This chain is Protein FixA, found in Escherichia coli O81 (strain ED1a).